The primary structure comprises 127 residues: Mitochondrial pyruvate carrier 2 (127 aa).

The Mitochondrial matrix portion of the chain corresponds to 2 to 40; it reads SAAGARGLRATYHRLLDKVELMLPEKLRPLYNHPAGPRT. A helical membrane pass occupies residues 41–61; sequence VFFWAPIMKWGLVCAGLADMA. Topologically, residues 62 to 72 are mitochondrial intermembrane; that stretch reads RPAEKLSTAQS. Residues 73–90 traverse the membrane as a helical segment; that stretch reads AVLMATGFIWSRYSLVII. Over 91–95 the chain is Mitochondrial matrix; it reads PKNWS. A helical transmembrane segment spans residues 96–115; that stretch reads LFAVNFFVGAAGASQLFRIW. Residues 116 to 127 are Mitochondrial intermembrane-facing; sequence RYNQELKAKAHK.

This sequence belongs to the mitochondrial pyruvate carrier (MPC) (TC 2.A.105) family. In terms of assembly, homodimer. Homooligomer. Forms heterodimers with MPC1 and MPC1L. The heterodimer is the more stable and dominant form.

The protein resides in the mitochondrion inner membrane. The enzyme catalyses pyruvate(out) + H(+)(out) = pyruvate(in) + H(+)(in). Its function is as follows. Mediates the uptake of pyruvate into mitochondria. In Homo sapiens (Human), this protein is Mitochondrial pyruvate carrier 2 (MPC2).